The following is an 842-amino-acid chain: Protein P (842 aa).

A terminal protein domain (TP) region spans residues 1–177; sequence MPLSYQHFRR…FCGSPYSWEQ (177 aa). Positions 178–345 are spacer; it reads ELHHGAFLDG…YCLTHLVNLL (168 aa). Residues 186-273 are disordered; it reads DGPSRMGEES…AKNIASRSAS (88 aa). The segment covering 223 to 239 has biased composition (polar residues); sequence GPQSQQRPLDGSQQGRS. A polymerase/reverse transcriptase domain (RT) region spans residues 346–689; the sequence is EDWGPCTEHG…YLNLYPVARQ (344 aa). A Reverse transcriptase domain is found at 356–599; that stretch reads RHHIRIPRTP…YSLNFMGYVI (244 aa). Mg(2+) is bound by residues D428, D550, and D551.

It belongs to the hepadnaviridae P protein family.

The enzyme catalyses DNA(n) + a 2'-deoxyribonucleoside 5'-triphosphate = DNA(n+1) + diphosphate. It catalyses the reaction Endonucleolytic cleavage to 5'-phosphomonoester.. Activated by host HSP70 and HSP40 in vitro to be able to bind the epsilon loop of the pgRNA. Because deletion of the RNase H region renders the protein partly chaperone-independent, the chaperones may be needed indirectly to relieve occlusion of the RNA-binding site by this domain. Inhibited by several reverse-transcriptase inhibitors: Lamivudine, Adefovir and Entecavir. Functionally, multifunctional enzyme that converts the viral RNA genome into dsDNA in viral cytoplasmic capsids. This enzyme displays a DNA polymerase activity that can copy either DNA or RNA templates, and a ribonuclease H (RNase H) activity that cleaves the RNA strand of RNA-DNA heteroduplexes in a partially processive 3'- to 5'-endonucleasic mode. Neo-synthesized pregenomic RNA (pgRNA) are encapsidated together with the P protein, and reverse-transcribed inside the nucleocapsid. Initiation of reverse-transcription occurs first by binding the epsilon loop on the pgRNA genome, and is initiated by protein priming, thereby the 5'-end of (-)DNA is covalently linked to P protein. Partial (+)DNA is synthesized from the (-)DNA template and generates the relaxed circular DNA (RC-DNA) genome. After budding and infection, the RC-DNA migrates in the nucleus, and is converted into a plasmid-like covalently closed circular DNA (cccDNA). The activity of P protein does not seem to be necessary for cccDNA generation, and is presumably released from (+)DNA by host nuclear DNA repair machinery. The protein is Protein P of Homo sapiens (Human).